The chain runs to 163 residues: CASP-like protein 1C2 (163 aa).

Residues 1–6 (MAKSNK) are Cytoplasmic-facing. The helical transmembrane segment at 7–27 (IFTNTLRLLALAATVVAIVFM) threads the bilayer. At 28–52 (VTSHDSAQVLNLTFTAKYSNTPAFK) the chain is on the extracellular side. Residue N38 is glycosylated (N-linked (GlcNAc...) asparagine). The helical transmembrane segment at 53-73 (FLVIGEAIAGGYTVISILLSF) threads the bilayer. The Cytoplasmic segment spans residues 74–79 (KGLFWR). Residues 80–100 (LIVILDMVTTVLLTSSISAAL) form a helical membrane-spanning segment. At 101–128 (AIAQVGKKGNTHAGWLPICGQVPDFCDY) the chain is on the extracellular side. The helical transmembrane segment at 129–149 (VTIALIAGFAAAIIYFVLLLC) threads the bilayer. The Cytoplasmic segment spans residues 150 to 163 (SLYVVLSPIFVATP).

It belongs to the Casparian strip membrane proteins (CASP) family. As to quaternary structure, homodimer and heterodimers.

Its subcellular location is the cell membrane. The chain is CASP-like protein 1C2 from Populus trichocarpa (Western balsam poplar).